The chain runs to 1007 residues: Serine/threonine-protein kinase PRP4 homolog (1007 aa).

The segment covering 1 to 10 (MAAAETQSLR) has biased composition (polar residues). A disordered region spans residues 1–99 (MAAAETQSLR…EGMSPAKRTK (99 aa)). Residue Ala-2 is modified to N-acetylalanine. Phosphoserine is present on residues Ser-8, Ser-20, Ser-23, and Ser-32. 2 stretches are compositionally biased toward basic residues: residues 39-59 (KHSRHKKKKHKHRSKHKKHKH) and 67-81 (KKHKHKHKHKKHKRK). Basic and acidic residues predominate over residues 82 to 91 (EVIDASDKEG). Residues Ser-87 and Ser-93 each carry the phosphoserine modification. Residue Lys-99 is modified to N6-acetyllysine; alternate. Lys-99 is covalently cross-linked (Glycyl lysine isopeptide (Lys-Gly) (interchain with G-Cter in SUMO2); alternate). Lys-111 is covalently cross-linked (Glycyl lysine isopeptide (Lys-Gly) (interchain with G-Cter in SUMO2)). Lys-117 participates in a covalent cross-link: Glycyl lysine isopeptide (Lys-Gly) (interchain with G-Cter in SUMO2); alternate. Lys-117 is covalently cross-linked (Glycyl lysine isopeptide (Lys-Gly) (interchain with G-Cter in SUMO1); alternate). Position 131 is a phosphoserine (Ser-131). Phosphotyrosine is present on Tyr-140. Disordered regions lie at residues 140–533 (YESG…EEED) and 559–583 (SNMSVPSEPSSPQSSTRTRSPSPDD). 3 positions are modified to phosphoserine: Ser-142, Ser-144, and Ser-166. Positions 157 to 168 (GNRSSTRSSSTK) are enriched in low complexity. Glycyl lysine isopeptide (Lys-Gly) (interchain with G-Cter in SUMO2) cross-links involve residues Lys-170 and Lys-177. Composition is skewed to basic residues over residues 179–202 (TTKKRSKSRSKERTRHRSDKKKSK) and 214–230 (RSKSKERKKSKSPSKRS). Phosphoserine is present on residues Ser-239, Ser-241, Ser-257, Ser-277, Ser-283, Ser-292, and Ser-294. The segment covering 247–270 (RSQEKIGKARSPTDDKVKIEDKSK) has biased composition (basic and acidic residues). Over residues 302 to 315 (SKDRRSRSKERKSK) the composition is skewed to basic residues. Over residues 316–325 (RSETDKEKKP) the composition is skewed to basic and acidic residues. Phosphoserine occurs at positions 328, 354, 356, 366, and 368. The segment covering 342–367 (PSRRPGRSPKRRSLSPKPRDKSRRSR) has biased composition (basic residues). At Thr-385 the chain carries Phosphothreonine. The residue at position 387 (Ser-387) is a Phosphoserine. Basic and acidic residues-rich tracts occupy residues 395 to 408 (RSLERKRREPERRR) and 415 to 429 (RPRDDILSRRERSKD). Ser-427, Ser-431, and Ser-437 each carry phosphoserine. Residues 438 to 497 (PTRRRSRSPIRRRSRSPLRRSRSPRRRSRSPRRRDRGRRSRSRLRRRSRSRGGRRRRSRS) are compositionally biased toward basic residues. A phosphoserine mark is found at Ser-518, Ser-519, Ser-520, Ser-565, Ser-569, Ser-578, and Ser-580. Residues 518-533 (SSSDDNLEDFDVEEED) are compositionally biased toward acidic residues. Residues 562–581 (SVPSEPSSPQSSTRTRSPSP) are compositionally biased toward low complexity. Glycyl lysine isopeptide (Lys-Gly) (interchain with G-Cter in SUMO2) cross-links involve residues Lys-593 and Lys-659. Residues 687–1003 (YNVYGYTGQG…INQALQHAFI (317 aa)) form the Protein kinase domain. Residues 693–701 (TGQGVFSNV) and Lys-717 contribute to the ATP site. Lys-717 carries the N6-acetyllysine modification. Asp-815 acts as the Proton acceptor in catalysis. Tyr-849 carries the post-translational modification Phosphotyrosine. Ser-852 is modified (phosphoserine).

The protein belongs to the protein kinase superfamily. CMGC Ser/Thr protein kinase family. Interacts with CLK1 C-terminus. Associates with the U5 snRNP and NCOR1 deacetylase complexes. Identified in the spliceosome C complex. Phosphorylated by CLK1. Autophosphorylated; phosphorylation inhibits interaction with its targets, such as PRPF6 or SMARCA4.

The protein resides in the nucleus. It is found in the chromosome. It localises to the centromere. Its subcellular location is the kinetochore. The enzyme catalyses L-seryl-[protein] + ATP = O-phospho-L-seryl-[protein] + ADP + H(+). It catalyses the reaction L-threonyl-[protein] + ATP = O-phospho-L-threonyl-[protein] + ADP + H(+). Its function is as follows. Serine/threonine kinase involved in spliceosomal assembly as well as mitosis and signaling regulation. Connects chromatin mediated regulation of transcription and pre-mRNA splicing. During spliceosomal assembly, interacts with and phosphorylates PRPF6 and PRPF31, components of the U4/U6-U5 tri-small nuclear ribonucleoprotein (snRNP), to facilitate the formation of the spliceosome B complex. Plays a role in regulating transcription and the spindle assembly checkpoint (SAC). Associates with U5 snRNP and NCOR1 deacetylase complexes which may allow a coordination of pre-mRNA splicing with chromatin remodeling events involved in transcriptional regulation. Associates and probably phosphorylates SMARCA4 and NCOR1. Phosphorylates SRSF1. Associates with kinetochores during mitosis and is necessary for recruitment and maintenance of the checkpoint proteins such as MAD1L1 and MAD12L1 at the kinetochores. Phosphorylates and regulates the activity of the transcription factors such as ELK1 and KLF13. Phosphorylates nuclear YAP1 and WWTR1/TAZ which induces nuclear exclusion and regulates Hippo signaling pathway, involved in tissue growth control. The sequence is that of Serine/threonine-protein kinase PRP4 homolog (PRP4K) from Pongo abelii (Sumatran orangutan).